The chain runs to 195 residues: Imidazoleglycerol-phosphate dehydratase (195 aa).

Belongs to the imidazoleglycerol-phosphate dehydratase family.

It localises to the cytoplasm. It catalyses the reaction D-erythro-1-(imidazol-4-yl)glycerol 3-phosphate = 3-(imidazol-4-yl)-2-oxopropyl phosphate + H2O. It functions in the pathway amino-acid biosynthesis; L-histidine biosynthesis; L-histidine from 5-phospho-alpha-D-ribose 1-diphosphate: step 6/9. The polypeptide is Imidazoleglycerol-phosphate dehydratase (Haloarcula marismortui (strain ATCC 43049 / DSM 3752 / JCM 8966 / VKM B-1809) (Halobacterium marismortui)).